Reading from the N-terminus, the 97-residue chain is Aspartyl/glutamyl-tRNA(Asn/Gln) amidotransferase subunit C (97 aa).

This sequence belongs to the GatC family. Heterotrimer of A, B and C subunits.

The catalysed reaction is L-glutamyl-tRNA(Gln) + L-glutamine + ATP + H2O = L-glutaminyl-tRNA(Gln) + L-glutamate + ADP + phosphate + H(+). It catalyses the reaction L-aspartyl-tRNA(Asn) + L-glutamine + ATP + H2O = L-asparaginyl-tRNA(Asn) + L-glutamate + ADP + phosphate + 2 H(+). Allows the formation of correctly charged Asn-tRNA(Asn) or Gln-tRNA(Gln) through the transamidation of misacylated Asp-tRNA(Asn) or Glu-tRNA(Gln) in organisms which lack either or both of asparaginyl-tRNA or glutaminyl-tRNA synthetases. The reaction takes place in the presence of glutamine and ATP through an activated phospho-Asp-tRNA(Asn) or phospho-Glu-tRNA(Gln). This Synechococcus sp. (strain JA-3-3Ab) (Cyanobacteria bacterium Yellowstone A-Prime) protein is Aspartyl/glutamyl-tRNA(Asn/Gln) amidotransferase subunit C.